The chain runs to 192 residues: Thymidine kinase (192 aa).

Residues 9–16 (SAMNAGKS) and 87–90 (DECQ) contribute to the ATP site. The active-site Proton acceptor is the E88. C145, C147, C182, and H185 together coordinate Zn(2+).

The protein belongs to the thymidine kinase family. Homotetramer.

The protein localises to the cytoplasm. The enzyme catalyses thymidine + ATP = dTMP + ADP + H(+). This chain is Thymidine kinase, found in Vibrio vulnificus (strain CMCP6).